The following is a 163-amino-acid chain: MEFVFYACSLIAVISTLLVIIQKNAVYSLLYLIISLLSISGIFFIFGAFFAGALEVVIYAGAIIVLFVFVIMMLNLGKKNDLQEKKYLNPIFWIGPSFLSLILFLLMTYAIFFVKDKQIYFSLIDVKEVGINLFGPYLLLVELSSLLLLSALVVVFHIGKEKK.

A run of 5 helical transmembrane segments spans residues 1–21 (MEFV…LVII), 30–50 (LYLI…GAFF), 54–74 (LEVV…IMML), 94–114 (IGPS…IFFV), and 138–158 (LLLV…VFHI).

It belongs to the complex I subunit 6 family. Composed of 13 different subunits. Subunits NuoA, H, J, K, L, M, N constitute the membrane sector of the complex.

The protein localises to the cell membrane. The catalysed reaction is a quinone + NADH + 5 H(+)(in) = a quinol + NAD(+) + 4 H(+)(out). NDH-1 shuttles electrons from NADH, via FMN and iron-sulfur (Fe-S) centers, to quinones in the respiratory chain. Couples the redox reaction to proton translocation (for every two electrons transferred, four hydrogen ions are translocated across the cytoplasmic membrane), and thus conserves the redox energy in a proton gradient. In Buchnera aphidicola subsp. Schizaphis graminum (strain Sg), this protein is NADH-quinone oxidoreductase subunit J (nuoJ).